The primary structure comprises 775 residues: MLRYARTVRFSQVGNSVRTSSGSFGPIRTIFISSHDRKSPSHSLSPISNLPNHNDSSTERARKTLDDDFQRKIKYDELKTRKRIEDLRALTKKVSQLVKQKQELSKIAKIPVPSDEIKKLKSVEDVVKVTKSQHVATVRTNIPEPETVTTHIEKEESEFVMEQNAFIVPATPIPEEIAKRLGLALRYLVSETNQNWTLVLDQLKADRGFKDLPYTTVVDFLTKIPASELQKVIPKVDQLLKEAKIPKTAKILNLYIASLASGSAVPNQVIQILENYCKRIRKLKKGKLPKRTCEVMVQAYGKNGNINRIQDLLSEMKLHKIEISGMALTNILATCVYKARDHKQAVEIFDTMRFQKEVYKPGTRAYQDIIVSYVNNDDIEKAIDIYREMITEKIEPNQQIMVALARGCASREAFKFKSWDFIFEINRNNWTPTLPTYEYMLYLSSRDGDLALTRALYSRLLKDNTVSLRSFNFLLLAYSKARLSDDLGEPFLINADEKGRKFRFNVIDRSGISDPTNQFPFLPFNELTTKEQIMAESSAIWAHACLNNSELINSESTTSYLNIASERGTLSDFIDRMEGSTFLDEKINNVLSGVVIEEPDVVVETTDFLTQKSSAHEKYDETSIVKSPILKSIQSKRTPRVSLTYVVALKAAGKFNNYNFANRIWQERGKFRKTETFKKLPRTEKDKLDFQFATQMVRTLTELNLLEDALAVLKSTEYQFRWTWKELDVLKSAAIRQGNTNVAQTVRSIARRAQLTYEGKIRRKDYKRYVMQRGY.

The N-terminal 18 residues, M1 to R18, are a transit peptide targeting the mitochondrion. A disordered region spans residues H35–L65. Residues S41 to D55 are compositionally biased toward polar residues. Basic and acidic residues predominate over residues S56–L65. 5 PPR repeats span residues P289–I323, S324–Q355, G362–P396, N397–P432, and T433–S467.

Belongs to the CCM1 family. In terms of assembly, binds to mitochondrial small subunit 15S rRNA.

Its subcellular location is the mitochondrion. In terms of biological role, regulates mitochondrial small subunit maturation by controlling 15S rRNA 5'-end processing. Localizes to the 5' precursor of the 15S rRNA in a position that is subsequently occupied by mS47 in the mature yeast mtSSU. Uses structure and sequence-specific RNA recognition, binding to a single-stranded region of the precursor and specifically recognizing bases -6 to -1. The exchange of Ccm1 for mS47 is coupled to the irreversible removal of precursor rRNA that is accompanied by conformational changes of the mitoribosomal proteins uS5m and mS26. These conformational changes signal completion of 5'-end rRNA processing through protection of the mature 5'-end of the 15S rRNA and stabilization of mS47. The removal of the 5' precursor together with the dissociation of Ccm1 may be catalyzed by the 5'-3' exoribonuclease Pet127. Involved in the specific removal of group I introns in mitochondrial encoded transcripts. In Scheffersomyces stipitis (strain ATCC 58785 / CBS 6054 / NBRC 10063 / NRRL Y-11545) (Yeast), this protein is Mitochondrial 15S rRNA processing factor CCM1 (CCM1).